Consider the following 301-residue polypeptide: MLLSPVTSTPFSVKDILRLERERSCPAASPHPRVRKSPENFQYLRMDAEPRGSEVHNAGGGGGDRKLDGSEPPGGPCEAVLEMDAERMGEPQPGLNAASPLGGGTRVPERGVGNSGDSVRGGRSEQPKARQRRKPRVLFSQAQVLALERRFKQQRYLSAPEREHLASALQLTSTQVKIWFQNRRYKCKRQRQDKSLELAGHPLTPRRVAVPVLVRDGKPCLGPGPGAPAFPSPYSAAVSPYSCYGGYSGAPYGAGYGTCYAGAPSGPAPHTPLASAGFGHGGQNATPQGHLAATLQGVRAW.

The interval 22 to 135 (ERSCPAASPH…QPKARQRRKP (114 aa)) is disordered. Residues 132-191 (RRKPRVLFSQAQVLALERRFKQQRYLSAPEREHLASALQLTSTQVKIWFQNRRYKCKRQR) constitute a DNA-binding region (homeobox).

This sequence belongs to the NK-2 homeobox family.

The protein resides in the nucleus. Its function is as follows. Acts as a transcriptional activator. In conjunction with NKX2-5, may play a role in both pharyngeal and cardiac embryonic development. The chain is Homeobox protein Nkx-2.6 (NKX2-6) from Homo sapiens (Human).